A 302-amino-acid chain; its full sequence is HTH-type transcriptional regulator ArgP (302 aa).

The HTH lysR-type domain occupies 4–60 (PDYRTLQALDAVIRERGFERAAQKLCITQSAVSQRIKQLENLFGQPLLVRTVPPRPT). Positions 21–40 (FERAAQKLCITQSAVSQRIK) form a DNA-binding region, H-T-H motif.

It belongs to the LysR transcriptional regulatory family. Homodimer.

In terms of biological role, controls the transcription of genes involved in arginine and lysine metabolism. This Yersinia pseudotuberculosis serotype O:1b (strain IP 31758) protein is HTH-type transcriptional regulator ArgP.